An 891-amino-acid chain; its full sequence is Aconitate hydratase A (891 aa).

The [4Fe-4S] cluster site is built by Cys-435, Cys-501, and Cys-504.

Belongs to the aconitase/IPM isomerase family. In terms of assembly, monomer. [4Fe-4S] cluster serves as cofactor.

The enzyme catalyses citrate = D-threo-isocitrate. The protein operates within carbohydrate metabolism; tricarboxylic acid cycle; isocitrate from oxaloacetate: step 2/2. In terms of biological role, catalyzes the reversible isomerization of citrate to isocitrate via cis-aconitate. The apo form of AcnA functions as a RNA-binding regulatory protein which plays a role as a maintenance or survival enzyme during nutritional or oxidative stress. During oxidative stress inactive AcnA apo-enzyme without iron sulfur clusters binds the acnA mRNA 3' UTRs (untranslated regions), stabilizes acnA mRNA and increases AcnA synthesis, thus mediating a post-transcriptional positive autoregulatory switch. AcnA also enhances the stability of the sodA transcript. This Escherichia coli (strain K12) protein is Aconitate hydratase A.